Consider the following 346-residue polypeptide: N-acetyl-gamma-glutamyl-phosphate reductase (346 aa).

Cysteine 149 is an active-site residue.

The protein belongs to the NAGSA dehydrogenase family. Type 1 subfamily.

The protein resides in the cytoplasm. It carries out the reaction N-acetyl-L-glutamate 5-semialdehyde + phosphate + NADP(+) = N-acetyl-L-glutamyl 5-phosphate + NADPH + H(+). Its pathway is amino-acid biosynthesis; L-arginine biosynthesis; N(2)-acetyl-L-ornithine from L-glutamate: step 3/4. Catalyzes the NADPH-dependent reduction of N-acetyl-5-glutamyl phosphate to yield N-acetyl-L-glutamate 5-semialdehyde. This is N-acetyl-gamma-glutamyl-phosphate reductase from Pelobacter propionicus (strain DSM 2379 / NBRC 103807 / OttBd1).